Consider the following 169-residue polypeptide: Crossover junction endodeoxyribonuclease RuvC (169 aa).

Residues D11, E71, and D143 contribute to the active site. Residues D11, E71, and D143 each contribute to the Mg(2+) site.

The protein belongs to the RuvC family. Homodimer which binds Holliday junction (HJ) DNA. The HJ becomes 2-fold symmetrical on binding to RuvC with unstacked arms; it has a different conformation from HJ DNA in complex with RuvA. In the full resolvosome a probable DNA-RuvA(4)-RuvB(12)-RuvC(2) complex forms which resolves the HJ. It depends on Mg(2+) as a cofactor.

It localises to the cytoplasm. The catalysed reaction is Endonucleolytic cleavage at a junction such as a reciprocal single-stranded crossover between two homologous DNA duplexes (Holliday junction).. The RuvA-RuvB-RuvC complex processes Holliday junction (HJ) DNA during genetic recombination and DNA repair. Endonuclease that resolves HJ intermediates. Cleaves cruciform DNA by making single-stranded nicks across the HJ at symmetrical positions within the homologous arms, yielding a 5'-phosphate and a 3'-hydroxyl group; requires a central core of homology in the junction. The consensus cleavage sequence is 5'-(A/T)TT(C/G)-3'. Cleavage occurs on the 3'-side of the TT dinucleotide at the point of strand exchange. HJ branch migration catalyzed by RuvA-RuvB allows RuvC to scan DNA until it finds its consensus sequence, where it cleaves and resolves the cruciform DNA. This Allorhizobium ampelinum (strain ATCC BAA-846 / DSM 112012 / S4) (Agrobacterium vitis (strain S4)) protein is Crossover junction endodeoxyribonuclease RuvC.